Reading from the N-terminus, the 258-residue chain is UPF0246 protein YaaA (258 aa).

The protein belongs to the UPF0246 family.

In Shigella sonnei (strain Ss046), this protein is UPF0246 protein YaaA.